Consider the following 359-residue polypeptide: Peptide chain release factor 1 (359 aa).

Gln235 bears the N5-methylglutamine mark. The segment covering 282-307 has biased composition (basic and acidic residues); that stretch reads RQRADSERSADRKSQVGSGDRSERIR. The interval 282–309 is disordered; it reads RQRADSERSADRKSQVGSGDRSERIRTY.

It belongs to the prokaryotic/mitochondrial release factor family. Post-translationally, methylated by PrmC. Methylation increases the termination efficiency of RF1.

It is found in the cytoplasm. In terms of biological role, peptide chain release factor 1 directs the termination of translation in response to the peptide chain termination codons UAG and UAA. This chain is Peptide chain release factor 1, found in Allorhizobium ampelinum (strain ATCC BAA-846 / DSM 112012 / S4) (Agrobacterium vitis (strain S4)).